A 186-amino-acid chain; its full sequence is Large ribosomal subunit protein uL5 (186 aa).

It belongs to the universal ribosomal protein uL5 family. As to quaternary structure, part of the 50S ribosomal subunit; contacts the 5S rRNA and probably tRNA. Forms a bridge to the 30S subunit in the 70S ribosome.

Its function is as follows. This is one of the proteins that bind and probably mediate the attachment of the 5S RNA into the large ribosomal subunit, where it forms part of the central protuberance. In the 70S ribosome it contacts protein S13 of the 30S subunit (bridge B1b), connecting the 2 subunits; this bridge is implicated in subunit movement. May contact the P site tRNA; the 5S rRNA and some of its associated proteins might help stabilize positioning of ribosome-bound tRNAs. The chain is Large ribosomal subunit protein uL5 from Methanopyrus kandleri (strain AV19 / DSM 6324 / JCM 9639 / NBRC 100938).